A 591-amino-acid polypeptide reads, in one-letter code: L-fucose isomerase (591 aa).

Catalysis depends on proton acceptor residues E337 and D361. 3 residues coordinate Mn(2+): E337, D361, and H528.

The protein belongs to the L-fucose isomerase family. Homohexamer. It depends on Mn(2+) as a cofactor.

Its subcellular location is the cytoplasm. The catalysed reaction is L-fucose = L-fuculose. It functions in the pathway carbohydrate degradation; L-fucose degradation; L-lactaldehyde and glycerone phosphate from L-fucose: step 1/3. In terms of biological role, converts the aldose L-fucose into the corresponding ketose L-fuculose. This Escherichia coli (strain 55989 / EAEC) protein is L-fucose isomerase.